Here is a 568-residue protein sequence, read N- to C-terminus: Sphingosine-1-phosphate lyase 1 (568 aa).

Topologically, residues 1–41 are lumenal; it reads MPSTDLLKLKDFEPYLEILEAYSTKAKNYVNGYCTKYEPWQ. A helical; Signal-anchor for type III membrane protein transmembrane segment spans residues 42-62; it reads LIAGSVLCTLLVVWVYELIFQ. Residues 63 to 568 lie on the Cytoplasmic side of the membrane; the sequence is PESLWSRFKN…NQMNGSPKPR (506 aa). K353 is subject to N6-(pyridoxal phosphate)lysine; alternate. K353 is modified (N6-acetyllysine; alternate). 3'-nitrotyrosine is present on residues Y356 and Y366. S564 is subject to Phosphoserine.

This sequence belongs to the group II decarboxylase family. Sphingosine-1-phosphate lyase subfamily. As to quaternary structure, homodimer. The cofactor is pyridoxal 5'-phosphate.

The protein localises to the endoplasmic reticulum membrane. The enzyme catalyses sphinganine 1-phosphate = hexadecanal + phosphoethanolamine. It carries out the reaction sphing-4-enine 1-phosphate = (2E)-hexadecenal + phosphoethanolamine. It participates in lipid metabolism; sphingolipid metabolism. Cleaves phosphorylated sphingoid bases (PSBs), such as sphingosine-1-phosphate, into fatty aldehydes and phosphoethanolamine. Elevates stress-induced ceramide production and apoptosis. Required for global lipid homeostasis in liver and cholesterol homeostasis in fibroblasts. Involved in the regulation of pro-inflammatory response and neutrophil trafficking. Modulates neuronal autophagy via phosphoethanolamine production which regulates accumulation of aggregate-prone proteins such as APP. Seems to play a role in establishing neuronal contact sites and axonal maintenance. The protein is Sphingosine-1-phosphate lyase 1 of Rattus norvegicus (Rat).